The sequence spans 417 residues: Gamma-glutamyl phosphate reductase (417 aa).

The protein belongs to the gamma-glutamyl phosphate reductase family.

The protein resides in the cytoplasm. It catalyses the reaction L-glutamate 5-semialdehyde + phosphate + NADP(+) = L-glutamyl 5-phosphate + NADPH + H(+). The protein operates within amino-acid biosynthesis; L-proline biosynthesis; L-glutamate 5-semialdehyde from L-glutamate: step 2/2. Its function is as follows. Catalyzes the NADPH-dependent reduction of L-glutamate 5-phosphate into L-glutamate 5-semialdehyde and phosphate. The product spontaneously undergoes cyclization to form 1-pyrroline-5-carboxylate. The polypeptide is Gamma-glutamyl phosphate reductase (Escherichia coli O6:K15:H31 (strain 536 / UPEC)).